The sequence spans 256 residues: Thiazole synthase (256 aa).

K95 functions as the Schiff-base intermediate with DXP in the catalytic mechanism. Residues G156, 182 to 183, and 204 to 205 contribute to the 1-deoxy-D-xylulose 5-phosphate site; these read AG and NT.

The protein belongs to the ThiG family. Homotetramer. Forms heterodimers with either ThiH or ThiS.

The protein localises to the cytoplasm. It carries out the reaction [ThiS sulfur-carrier protein]-C-terminal-Gly-aminoethanethioate + 2-iminoacetate + 1-deoxy-D-xylulose 5-phosphate = [ThiS sulfur-carrier protein]-C-terminal Gly-Gly + 2-[(2R,5Z)-2-carboxy-4-methylthiazol-5(2H)-ylidene]ethyl phosphate + 2 H2O + H(+). It functions in the pathway cofactor biosynthesis; thiamine diphosphate biosynthesis. Catalyzes the rearrangement of 1-deoxy-D-xylulose 5-phosphate (DXP) to produce the thiazole phosphate moiety of thiamine. Sulfur is provided by the thiocarboxylate moiety of the carrier protein ThiS. In vitro, sulfur can be provided by H(2)S. The polypeptide is Thiazole synthase (Photobacterium profundum (strain SS9)).